The following is a 301-amino-acid chain: Probable tRNA pseudouridine synthase B (301 aa).

The active-site Nucleophile is the Asp-54. The 75-residue stretch at 227–301 (LPRLTIADSA…VVVALERVLV (75 aa)) folds into the PUA domain.

This sequence belongs to the pseudouridine synthase TruB family. Type 2 subfamily.

It catalyses the reaction uridine(55) in tRNA = pseudouridine(55) in tRNA. In terms of biological role, could be responsible for synthesis of pseudouridine from uracil-55 in the psi GC loop of transfer RNAs. This is Probable tRNA pseudouridine synthase B from Halobacterium salinarum (strain ATCC 29341 / DSM 671 / R1).